The sequence spans 476 residues: Serine/threonine-protein kinase Chk1 (476 aa).

Positions 1-265 are interaction with CLSPN; that stretch reads MAVPFVEDWD…IPDIKKDRWY (265 aa). Residues 9–265 form the Protein kinase domain; it reads WDLVQTLGEG…IPDIKKDRWY (257 aa). Residues 15–23 and lysine 38 contribute to the ATP site; that span reads LGEGAYGEV. Aspartate 130 acts as the Proton acceptor in catalysis. Lysine 132 is covalently cross-linked (Glycyl lysine isopeptide (Lys-Gly) (interchain with G-Cter in ubiquitin)). A disordered region spans residues 270–327; that stretch reads KKGAKRPRVTSGGVSESPSGFSKHIQSNLDFSPVNSASSEENVKYSSSQPEPRTGLSL. A phosphoserine mark is found at serine 280, serine 286, serine 296, and serine 301. Residues 281 to 320 are compositionally biased toward polar residues; the sequence is GGVSESPSGFSKHIQSNLDFSPVNSASSEENVKYSSSQPE. Position 317 is a phosphoserine; by ATM and ATR (serine 317). Position 331 is a phosphoserine (serine 331). At serine 345 the chain carries Phosphoserine; by ATM and ATR. The autoinhibitory region stretch occupies residues 391 to 476; it reads QCLKETCEKL…SSQKIWLPAT (86 aa). Residue lysine 436 forms a Glycyl lysine isopeptide (Lys-Gly) (interchain with G-Cter in ubiquitin) linkage. Residues serine 467 and serine 468 each carry the phosphoserine modification.

Belongs to the protein kinase superfamily. CAMK Ser/Thr protein kinase family. NIM1 subfamily. As to quaternary structure, interacts (phosphorylated by ATR) with RAD51. Interacts with and phosphorylates CLSPN, an adapter protein that regulates the ATR-dependent phosphorylation of CHEK1. Interacts with BRCA1. Interacts with and phosphorylates CDC25A, CDC25B and CDC25C. Interacts with FBXO6, which regulates CHEK1. Interacts with PPM1D, which regulates CHEK1 through dephosphorylation. Interacts with TIMELESS; DNA damage-dependent. Interacts with FEM1B; activates CHEK1 in response to stress. Interacts with TLK1. Interacts with XPO1 and YWHAZ. Interacts with CDK5RAP3; antagonizes CHEK1. In terms of assembly, isoform 1 associates with isoform 2, the interaction is disrupted upon phosphorylation by ATR. Post-translationally, phosphorylated by ATR in a RAD17-dependent manner in response to ultraviolet irradiation and inhibition of DNA replication. Phosphorylated by ATM in response to ionizing irradiation. ATM and ATR can both phosphorylate Ser-317 and Ser-345 and this results in enhanced kinase activity. Phosphorylation at Ser-345 induces a change in the conformation of the protein, activates the kinase activity and is a prerequisite for interaction with FBXO6 and subsequent ubiquitination at Lys-436. Phosphorylation at Ser-345 also increases binding to 14-3-3 proteins and promotes nuclear retention. Conversely, dephosphorylation at Ser-345 by PPM1D may contribute to exit from checkpoint mediated cell cycle arrest. Phosphorylation at Ser-280 by AKT1/PKB, may promote mono and/or diubiquitination. Also phosphorylated at undefined residues during mitotic arrest, resulting in decreased activity. In terms of processing, ubiquitinated. Mono or diubiquitination promotes nuclear exclusion. The activated form (phosphorylated on Ser-345) is polyubiquitinated at Lys-436 by some SCF-type E3 ubiquitin ligase complex containing FBXO6 promoting its degradation. Ubiquitination and degradation are required to terminate the checkpoint and ensure that activated CHEK1 does not accumulate as cells progress through S phase, when replication forks encounter transient impediments during normal DNA replication. 'Lys-63'-mediated ubiquitination by TRAF4 at Lys-132 activates cell cycle arrest and activation of DNA repair. Proteolytically cleaved at the C-terminus by SPRTN during normal DNA replication, thereby promoting CHEK1 removal from chromatin and activating the protein kinase activity. In terms of tissue distribution, expressed ubiquitously with the most abundant expression in thymus, testis, small intestine and colon.

The protein localises to the nucleus. It localises to the chromosome. The protein resides in the cytoplasm. It is found in the cytoskeleton. Its subcellular location is the microtubule organizing center. The protein localises to the centrosome. It catalyses the reaction L-seryl-[protein] + ATP = O-phospho-L-seryl-[protein] + ADP + H(+). The catalysed reaction is L-threonyl-[protein] + ATP = O-phospho-L-threonyl-[protein] + ADP + H(+). Its activity is regulated as follows. Activated through phosphorylation predominantly by ATR but also by ATM in response to DNA damage or inhibition of DNA replication. Activation is modulated by several mediators including CLSPN, BRCA1 and FEM1B. Proteolytic cleavage at the C-terminus by SPRTN during normal DNA replication activates the protein kinase activity. Functionally, serine/threonine-protein kinase which is required for checkpoint-mediated cell cycle arrest and activation of DNA repair in response to the presence of DNA damage or unreplicated DNA. May also negatively regulate cell cycle progression during unperturbed cell cycles. This regulation is achieved by a number of mechanisms that together help to preserve the integrity of the genome. Recognizes the substrate consensus sequence [R-X-X-S/T]. Binds to and phosphorylates CDC25A, CDC25B and CDC25C. Phosphorylation of CDC25A at 'Ser-178' and 'Thr-507' and phosphorylation of CDC25C at 'Ser-216' creates binding sites for 14-3-3 proteins which inhibit CDC25A and CDC25C. Phosphorylation of CDC25A at 'Ser-76', 'Ser-124', 'Ser-178', 'Ser-279' and 'Ser-293' promotes proteolysis of CDC25A. Phosphorylation of CDC25A at 'Ser-76' primes the protein for subsequent phosphorylation at 'Ser-79', 'Ser-82' and 'Ser-88' by NEK11, which is required for polyubiquitination and degradation of CDCD25A. Inhibition of CDC25 leads to increased inhibitory tyrosine phosphorylation of CDK-cyclin complexes and blocks cell cycle progression. Also phosphorylates NEK6. Binds to and phosphorylates RAD51 at 'Thr-309', which promotes the release of RAD51 from BRCA2 and enhances the association of RAD51 with chromatin, thereby promoting DNA repair by homologous recombination. Phosphorylates multiple sites within the C-terminus of TP53, which promotes activation of TP53 by acetylation and promotes cell cycle arrest and suppression of cellular proliferation. Also promotes repair of DNA cross-links through phosphorylation of FANCE. Binds to and phosphorylates TLK1 at 'Ser-743', which prevents the TLK1-dependent phosphorylation of the chromatin assembly factor ASF1A. This may enhance chromatin assembly both in the presence or absence of DNA damage. May also play a role in replication fork maintenance through regulation of PCNA. May regulate the transcription of genes that regulate cell-cycle progression through the phosphorylation of histones. Phosphorylates histone H3.1 (to form H3T11ph), which leads to epigenetic inhibition of a subset of genes. May also phosphorylate RB1 to promote its interaction with the E2F family of transcription factors and subsequent cell cycle arrest. Phosphorylates SPRTN, promoting SPRTN recruitment to chromatin. Reduces replication stress and activates the G2/M checkpoint, by phosphorylating and inactivating PABIR1/FAM122A and promoting the serine/threonine-protein phosphatase 2A-mediated dephosphorylation and stabilization of WEE1 levels and activity. Its function is as follows. Endogenous repressor of isoform 1, interacts with, and antagonizes CHK1 to promote the S to G2/M phase transition. In Homo sapiens (Human), this protein is Serine/threonine-protein kinase Chk1 (CHEK1).